A 453-amino-acid polypeptide reads, in one-letter code: Succinate-semialdehyde dehydrogenase (acetylating) (453 aa).

188–193 (ATGGAG) serves as a coordination point for NADP(+). Cysteine 242 is a catalytic residue.

As to quaternary structure, homodimer.

The catalysed reaction is succinate semialdehyde + NADP(+) + CoA = succinyl-CoA + NADPH + H(+). Functionally, catalyzes the reduction of succinate semialdehyde to succinyl-CoA. The enzyme is specific for succinate semialdehyde and succinyl-CoA, and only shows low activity with palmitoyl-CoA. There is no activity with NAD(+) as cosubstrate. The sequence is that of Succinate-semialdehyde dehydrogenase (acetylating) (sucD) from Clostridium kluyveri (strain ATCC 8527 / DSM 555 / NBRC 12016 / NCIMB 10680 / K1).